A 357-amino-acid polypeptide reads, in one-letter code: MAENKRTRWQRRPGTTGGKLPWNDWRNATTWRKATQLLLLAMNIYIAITFWYWVRYYETASSTTFVARPGGIEGWLPIAGLMNLKYSLVTGQLPSVHAAAMLLLVAFIVISLLLKKAFCSWLCPVGTLSELIGDLGNKLFGRQCVLPRWLDIPLRGVKYLLLSFFIYIALLMPAQAIHYFMLSPYSVVMDVKMLDFFRHMGTATLISVTVLLIASLFIRHAWCRYLCPYGALMGVVSLLSPFKIRRNAESCIDCGKCAKNCPSRIPVDKLIQVRTVECTGCMTCVESCPVASTLTFSLQKPAANKKAFALSGWLMTLLVLGIMFAVIGYAMYAGVWQSPVPEELYRRLIPQAPMIGH.

Residues 1 to 36 lie on the Cytoplasmic side of the membrane; it reads MAENKRTRWQRRPGTTGGKLPWNDWRNATTWRKATQ. Residues 37–54 form a helical membrane-spanning segment; it reads LLLLAMNIYIAITFWYWV. Residues 55–91 are Periplasmic-facing; sequence RYYETASSTTFVARPGGIEGWLPIAGLMNLKYSLVTG. The chain crosses the membrane as a helical span at residues 92–114; it reads QLPSVHAAAMLLLVAFIVISLLL. Residues 115–158 are Cytoplasmic-facing; it reads KKAFCSWLCPVGTLSELIGDLGNKLFGRQCVLPRWLDIPLRGVK. The helical transmembrane segment at 159–181 threads the bilayer; the sequence is YLLLSFFIYIALLMPAQAIHYFM. At 182–195 the chain is on the periplasmic side; that stretch reads LSPYSVVMDVKMLD. Residues 196–218 traverse the membrane as a helical segment; it reads FFRHMGTATLISVTVLLIASLFI. Topologically, residues 219 to 309 are cytoplasmic; the sequence is RHAWCRYLCP…KPAANKKAFA (91 aa). 4Fe-4S ferredoxin-type domains are found at residues 242–270 and 269–299; these read FKIR…VDKL and KLIQ…FSLQ. 8 residues coordinate [4Fe-4S] cluster: Cys-251, Cys-254, Cys-257, Cys-261, Cys-278, Cys-281, Cys-284, and Cys-288. The helical transmembrane segment at 310 to 332 threads the bilayer; the sequence is LSGWLMTLLVLGIMFAVIGYAMY. Over 333–357 the chain is Periplasmic; that stretch reads AGVWQSPVPEELYRRLIPQAPMIGH.

It is found in the cell inner membrane. The chain is Putative electron transport protein YccM (yccM) from Escherichia coli (strain K12).